A 357-amino-acid polypeptide reads, in one-letter code: 3'(2'),5'-bisphosphate nucleotidase (357 aa).

The active-site Proton acceptor is Asp-49. 4 residues coordinate Mg(2+): Glu-72, Asp-142, Ile-144, and Asp-145. Thr-147 functions as the Proton acceptor in the catalytic mechanism. Adenosine 3',5'-bisphosphate-binding residues include Thr-147, His-241, Ser-264, Lys-267, Arg-281, and Asp-294. AMP-binding residues include His-241, Ser-264, Lys-267, Arg-281, and Asp-294. Residue Asp-294 coordinates Mg(2+).

The protein belongs to the inositol monophosphatase superfamily. Mg(2+) is required as a cofactor.

The protein resides in the cytoplasm. It is found in the nucleus. It carries out the reaction 3'-phosphoadenylyl sulfate + H2O = adenosine 5'-phosphosulfate + phosphate. The enzyme catalyses adenosine 3',5'-bisphosphate + H2O = AMP + phosphate. It catalyses the reaction adenosine 2',5'-bisphosphate + H2O = AMP + phosphate. With respect to regulation, phosphatase activity is very sensitive to lithium and moderately sensitive to sodium. The inhibitory effects of lithium and sodium are overcome by high concentrations of potassium. Lithium exerts its inhibitory action by blocking the products of the PAP hydrolysis at the active site. Its function is as follows. Phosphatase that converts adenosine 3'-phosphate 5'-phosphosulfate (PAPS) to adenosine 5'-phosphosulfate (APS) and 3'(2')-phosphoadenosine 5'-phosphate (PAP) to AMP. May regulate the flux of sulfur in the sulfur-activation pathway by converting PAPS to APS. Involved in salt tolerance. Confers resistance to lithium. Shows no activity on inositol mono- and diphosphates, 3'-AMP, AMP, nicotinamide adenine dinucleotide phosphate (NADP), and p-nitrophenylphosphate. This is 3'(2'),5'-bisphosphate nucleotidase (MET22) from Saccharomyces cerevisiae (strain ATCC 204508 / S288c) (Baker's yeast).